A 443-amino-acid polypeptide reads, in one-letter code: D-aminoacyl-tRNA deacylase (443 aa).

Belongs to the DtdA deacylase family. In terms of assembly, monomer. Zn(2+) is required as a cofactor.

The catalysed reaction is a D-aminoacyl-tRNA + H2O = a tRNA + a D-alpha-amino acid + H(+). It catalyses the reaction glycyl-tRNA(Ala) + H2O = tRNA(Ala) + glycine + H(+). In terms of biological role, D-aminoacyl-tRNA deacylase with broad substrate specificity. By recycling D-aminoacyl-tRNA to D-amino acids and free tRNA molecules, this enzyme counteracts the toxicity associated with the formation of D-aminoacyl-tRNA entities in vivo. The polypeptide is D-aminoacyl-tRNA deacylase (Methanocorpusculum labreanum (strain ATCC 43576 / DSM 4855 / Z)).